The following is a 293-amino-acid chain: Acetylglutamate kinase (293 aa).

Substrate-binding positions include 68–69, arginine 90, and asparagine 189; that span reads GG.

The protein belongs to the acetylglutamate kinase family. ArgB subfamily.

Its subcellular location is the cytoplasm. The catalysed reaction is N-acetyl-L-glutamate + ATP = N-acetyl-L-glutamyl 5-phosphate + ADP. The protein operates within amino-acid biosynthesis; L-arginine biosynthesis; N(2)-acetyl-L-ornithine from L-glutamate: step 2/4. Functionally, catalyzes the ATP-dependent phosphorylation of N-acetyl-L-glutamate. The chain is Acetylglutamate kinase from Mycobacterium ulcerans (strain Agy99).